Consider the following 293-residue polypeptide: MPELPEVETVRLGLTPAMEGFRIARAVTNRDDLRFPLQKDFVARLTGQIVTGLGRRAKYLLADLASGDVLLMHLGMSGSFRVVAADGAHTPGEFHHPRSEDRTHDHVVFDMSSGARVIFNDPRRFGFMKIFPRAAIDDEPHLKGLGPEPLGNAFDAVMLARACAGKQTSLKAALLDQRVVAGLGNIYVCEALWRAHLSPKRKAATLANRKNEPTDHALRLTDAIRAVLGDAIKAGGSSLRDHRQTSGELGYFQHSFAAYDREGERCRTDGCGGAVKRFVQNGRSTFWCSGCQK.

The active-site Schiff-base intermediate with DNA is the Pro-2. The Proton donor role is filled by Glu-3. The active-site Proton donor; for beta-elimination activity is Lys-58. The DNA site is built by His-104, Arg-123, and Lys-166. An FPG-type zinc finger spans residues 257-293 (AAYDREGERCRTDGCGGAVKRFVQNGRSTFWCSGCQK). The active-site Proton donor; for delta-elimination activity is the Arg-283.

The protein belongs to the FPG family. In terms of assembly, monomer. Requires Zn(2+) as cofactor.

It carries out the reaction Hydrolysis of DNA containing ring-opened 7-methylguanine residues, releasing 2,6-diamino-4-hydroxy-5-(N-methyl)formamidopyrimidine.. The enzyme catalyses 2'-deoxyribonucleotide-(2'-deoxyribose 5'-phosphate)-2'-deoxyribonucleotide-DNA = a 3'-end 2'-deoxyribonucleotide-(2,3-dehydro-2,3-deoxyribose 5'-phosphate)-DNA + a 5'-end 5'-phospho-2'-deoxyribonucleoside-DNA + H(+). Its function is as follows. Involved in base excision repair of DNA damaged by oxidation or by mutagenic agents. Acts as a DNA glycosylase that recognizes and removes damaged bases. Has a preference for oxidized purines, such as 7,8-dihydro-8-oxoguanine (8-oxoG). Has AP (apurinic/apyrimidinic) lyase activity and introduces nicks in the DNA strand. Cleaves the DNA backbone by beta-delta elimination to generate a single-strand break at the site of the removed base with both 3'- and 5'-phosphates. The sequence is that of Formamidopyrimidine-DNA glycosylase from Rhodopseudomonas palustris (strain BisB5).